The primary structure comprises 646 residues: Major capsid protein (646 aa).

Belongs to the NCLDV major capsid protein family. In terms of assembly, homotrimer. The membrane-bound form, but not the cytosolic one, assembles into large complexes. Interacts with the minor capsid proteins M1249L and p17; these interactions form a rigid zipper structure that stabilizes the capsomers.

The protein localises to the virion. Its subcellular location is the host endoplasmic reticulum membrane. The protein resides in the host cytoplasm. It localises to the host cytosol. Its function is as follows. Capsid protein that self-assembles to form the pseudo-hexameric capsomers of the icosahedral capsid. The capsid is constructed of 2760 pseudo-hexameric capsomers and 12 pentameric capsomers, with a T=277 symmetry, about 200 nm in diameter. The capsid encapsulates the DNA-containing nucleoid, the core shell and the inner membrane. Plays an essential role in virion assembly. Involved in virus attachment to the host cell. The protein is Major capsid protein of African swine fever virus (isolate Pig/Kenya/KEN-50/1950) (ASFV).